Consider the following 459-residue polypeptide: Argininosuccinate lyase (459 aa).

Belongs to the lyase 1 family. Argininosuccinate lyase subfamily.

It is found in the cytoplasm. The enzyme catalyses 2-(N(omega)-L-arginino)succinate = fumarate + L-arginine. It functions in the pathway amino-acid biosynthesis; L-arginine biosynthesis; L-arginine from L-ornithine and carbamoyl phosphate: step 3/3. This Buchnera aphidicola subsp. Schizaphis graminum (strain Sg) protein is Argininosuccinate lyase.